Reading from the N-terminus, the 251-residue chain is Hydroxyacylglutathione hydrolase (251 aa).

Zn(2+) is bound by residues His53, His55, Asp57, His58, His110, Asp127, and His165.

It belongs to the metallo-beta-lactamase superfamily. Glyoxalase II family. Monomer. It depends on Zn(2+) as a cofactor.

The catalysed reaction is an S-(2-hydroxyacyl)glutathione + H2O = a 2-hydroxy carboxylate + glutathione + H(+). Its pathway is secondary metabolite metabolism; methylglyoxal degradation; (R)-lactate from methylglyoxal: step 2/2. Functionally, thiolesterase that catalyzes the hydrolysis of S-D-lactoyl-glutathione to form glutathione and D-lactic acid. This chain is Hydroxyacylglutathione hydrolase, found in Escherichia fergusonii (strain ATCC 35469 / DSM 13698 / CCUG 18766 / IAM 14443 / JCM 21226 / LMG 7866 / NBRC 102419 / NCTC 12128 / CDC 0568-73).